The sequence spans 199 residues: UPF0329 protein ECU01_0120/ECU01_1490/ECU08_0050 (199 aa).

This sequence belongs to the UPF0329 family.

In Encephalitozoon cuniculi (strain GB-M1) (Microsporidian parasite), this protein is UPF0329 protein ECU01_0120/ECU01_1490/ECU08_0050.